Consider the following 365-residue polypeptide: Saoe class I histocompatibility antigen, C alpha chain (365 aa).

The signal sequence occupies residues 1–24; the sequence is MTIMAPRTLLLLLSGALSVTETWA. The alpha-1 stretch occupies residues 25–114; that stretch reads GSHSMRYFST…LLGYYNQSEA (90 aa). Topologically, residues 25–308 are extracellular; it reads GSHSMRYFST…EPPSQPTIPI (284 aa). Asparagine 110 carries an N-linked (GlcNAc...) asparagine glycan. The alpha-2 stretch occupies residues 115 to 206; it reads GFHTIQWMYG…ENGKEMLQRA (92 aa). Disulfide bonds link cysteine 125–cysteine 188 and cysteine 227–cysteine 283. Positions 207-298 are alpha-3; that stretch reads EPPKTHVTHH…GLPEPFTLRW (92 aa). The region spanning 209-297 is the Ig-like C1-type domain; the sequence is PKTHVTHHPV…EGLPEPFTLR (89 aa). The segment at 299–308 is connecting peptide; the sequence is EPPSQPTIPI. The chain crosses the membrane as a helical span at residues 309 to 332; the sequence is MGIVAILAILGAVVTGAVVAAVMW. The Cytoplasmic segment spans residues 333 to 365; sequence RKKSSDKKGGSYSQAARSDSAQGSDVSLTACKV. The segment at 337-365 is disordered; sequence SDKKGGSYSQAARSDSAQGSDVSLTACKV. Residues 346–359 show a composition bias toward polar residues; the sequence is QAARSDSAQGSDVS. A phosphoserine mark is found at serine 356 and serine 359.

It belongs to the MHC class I family. As to quaternary structure, heterodimer of an alpha chain and a beta chain (beta-2-microglobulin).

It is found in the membrane. Functionally, involved in the presentation of foreign antigens to the immune system. This chain is Saoe class I histocompatibility antigen, C alpha chain, found in Saguinus oedipus (Cotton-top tamarin).